The chain runs to 275 residues: Small ribosomal subunit protein uS3 (275 aa).

The 69-residue stretch at 38–106 (IRRMMTSGME…QVQLNILEVK (69 aa)) folds into the KH type-2 domain. The span at 216–228 (NAAARAGNRPARG) shows a compositional bias: low complexity. Residues 216–275 (NAAARAGNRPARGGADRPARGGRGGERGGRGRKPQQAPAAEAPKAEAPAAAPAESTGTEA) are disordered. Residues 229 to 244 (GADRPARGGRGGERGG) show a composition bias toward basic and acidic residues. The span at 249–268 (PQQAPAAEAPKAEAPAAAPA) shows a compositional bias: low complexity.

It belongs to the universal ribosomal protein uS3 family. As to quaternary structure, part of the 30S ribosomal subunit. Forms a tight complex with proteins S10 and S14.

Its function is as follows. Binds the lower part of the 30S subunit head. Binds mRNA in the 70S ribosome, positioning it for translation. This Streptomyces avermitilis (strain ATCC 31267 / DSM 46492 / JCM 5070 / NBRC 14893 / NCIMB 12804 / NRRL 8165 / MA-4680) protein is Small ribosomal subunit protein uS3.